We begin with the raw amino-acid sequence, 312 residues long: Chorismate mutase 1, chloroplastic (312 aa).

The N-terminal 44 residues, 1–44, are a transit peptide targeting the chloroplast; that stretch reads MAFKLATKAAAASPAAAHRGGLARGPEGTSRVAFGPAPRNKGLR. The disordered stretch occupies residues 16–58; the sequence is AAHRGGLARGPEGTSRVAFGPAPRNKGLRAANNSATPVAKEER. Residues arginine 58 and 190 to 193 contribute to the L-phenylalanine site; that span reads NAGS. Residues arginine 58 and 190-193 each bind L-tyrosine; that span reads NAGS. A Chorismate mutase domain is found at 58–312; that stretch reads RVDRSEILTL…QIAYLLRRLD (255 aa).

As to quaternary structure, homodimer. Interacts with Cmu1 of the fungal pathogen Ustilago maydis.

The protein resides in the plastid. Its subcellular location is the chloroplast. The enzyme catalyses chorismate = prephenate. The protein operates within metabolic intermediate biosynthesis; prephenate biosynthesis; prephenate from chorismate: step 1/1. With respect to regulation, allosterically inhibited by tyrosine and phenylalanine. Activated by tryptophan. Its function is as follows. May play a role in chloroplast biogenesis. The chain is Chorismate mutase 1, chloroplastic from Zea mays (Maize).